Consider the following 494-residue polypeptide: ATP synthase subunit beta, plastid (494 aa).

169-176 provides a ligand contact to ATP; that stretch reads GGAGVGKT.

The protein belongs to the ATPase alpha/beta chains family. In terms of assembly, F-type ATPases have 2 components, CF(1) - the catalytic core - and CF(0) - the membrane proton channel. CF(1) has five subunits: alpha(3), beta(3), gamma(1), delta(1), epsilon(1). CF(0) has four main subunits: a(1), b(1), b'(1) and c(9-12).

Its subcellular location is the plastid thylakoid membrane. The enzyme catalyses ATP + H2O + 4 H(+)(in) = ADP + phosphate + 5 H(+)(out). Produces ATP from ADP in the presence of a proton gradient across the membrane. The catalytic sites are hosted primarily by the beta subunits. This chain is ATP synthase subunit beta, plastid (atpB), found in Cuscuta gronovii (Common dodder).